We begin with the raw amino-acid sequence, 400 residues long: Acetate kinase (400 aa).

Asn-10 lines the Mg(2+) pocket. Lys-17 is a binding site for ATP. Position 91 (Arg-91) interacts with substrate. The active-site Proton donor/acceptor is the Asp-150. ATP is bound by residues 210–214 (HLGNG), 285–287 (DCR), and 333–337 (GIGEN). Residue Glu-387 coordinates Mg(2+).

Belongs to the acetokinase family. Homodimer. Requires Mg(2+) as cofactor. Mn(2+) is required as a cofactor.

It is found in the cytoplasm. It carries out the reaction acetate + ATP = acetyl phosphate + ADP. It participates in metabolic intermediate biosynthesis; acetyl-CoA biosynthesis; acetyl-CoA from acetate: step 1/2. Functionally, catalyzes the formation of acetyl phosphate from acetate and ATP. Can also catalyze the reverse reaction. This Yersinia pseudotuberculosis serotype IB (strain PB1/+) protein is Acetate kinase.